Reading from the N-terminus, the 151-residue chain is Nucleoside diphosphate kinase (151 aa).

6 residues coordinate ATP: lysine 11, phenylalanine 59, arginine 87, threonine 93, arginine 104, and asparagine 114. Histidine 117 acts as the Pros-phosphohistidine intermediate in catalysis.

Belongs to the NDK family. As to quaternary structure, homohexamer. Requires Mg(2+) as cofactor.

It carries out the reaction a 2'-deoxyribonucleoside 5'-diphosphate + ATP = a 2'-deoxyribonucleoside 5'-triphosphate + ADP. The enzyme catalyses a ribonucleoside 5'-diphosphate + ATP = a ribonucleoside 5'-triphosphate + ADP. Its function is as follows. Major role in the synthesis of nucleoside triphosphates other than ATP. The ATP gamma phosphate is transferred to the NDP beta phosphate via a ping-pong mechanism, using a phosphorylated active-site intermediate. The chain is Nucleoside diphosphate kinase from Ginglymostoma cirratum (Nurse shark).